A 300-amino-acid polypeptide reads, in one-letter code: Glutamyl-Q tRNA(Asp) synthetase (300 aa).

Residues 14 to 18 (RFAPT) and Glu50 each bind L-glutamate. Positions 17–27 (PTPSGFLHFGS) match the 'HIGH' region motif. Cys106, Cys108, Tyr120, and Cys124 together coordinate Zn(2+). 2 residues coordinate L-glutamate: Tyr177 and Arg195. Residues 233–237 (KLGKS) carry the 'KMSKS' region motif. Lys236 is a binding site for ATP.

It belongs to the class-I aminoacyl-tRNA synthetase family. GluQ subfamily. It depends on Zn(2+) as a cofactor.

Its function is as follows. Catalyzes the tRNA-independent activation of glutamate in presence of ATP and the subsequent transfer of glutamate onto a tRNA(Asp). Glutamate is transferred on the 2-amino-5-(4,5-dihydroxy-2-cyclopenten-1-yl) moiety of the queuosine in the wobble position of the QUC anticodon. The protein is Glutamyl-Q tRNA(Asp) synthetase of Pseudomonas putida (strain ATCC 47054 / DSM 6125 / CFBP 8728 / NCIMB 11950 / KT2440).